The following is a 483-amino-acid chain: ATP synthase subunit beta (483 aa).

167 to 174 is an ATP binding site; that stretch reads GGAGVGKT.

Belongs to the ATPase alpha/beta chains family. As to quaternary structure, F-type ATPases have 2 components, CF(1) - the catalytic core - and CF(0) - the membrane proton channel. CF(1) has five subunits: alpha(3), beta(3), gamma(1), delta(1), epsilon(1). CF(0) has three main subunits: a(1), b(2) and c(9-12). The alpha and beta chains form an alternating ring which encloses part of the gamma chain. CF(1) is attached to CF(0) by a central stalk formed by the gamma and epsilon chains, while a peripheral stalk is formed by the delta and b chains.

It localises to the cell membrane. It carries out the reaction ATP + H2O + 4 H(+)(in) = ADP + phosphate + 5 H(+)(out). Functionally, produces ATP from ADP in the presence of a proton gradient across the membrane. The catalytic sites are hosted primarily by the beta subunits. This Paenarthrobacter aurescens (strain TC1) protein is ATP synthase subunit beta.